Consider the following 129-residue polypeptide: uncharacterized protein (129 aa).

Positions 52–94 are disordered; sequence NGDEESQDDWLNDLLKSDGDGGKAGPVDPSHPMETTTTDHSSQ. Positions 53–62 are enriched in acidic residues; the sequence is GDEESQDDWL. Residues 84 to 94 show a composition bias toward polar residues; that stretch reads METTTTDHSSQ.

This is an uncharacterized protein from Caenorhabditis elegans.